Reading from the N-terminus, the 329-residue chain is Elongation factor Ts (329 aa).

The interval 79–82 is involved in Mg(2+) ion dislocation from EF-Tu; it reads TDFV.

The protein belongs to the EF-Ts family.

It is found in the cytoplasm. Its function is as follows. Associates with the EF-Tu.GDP complex and induces the exchange of GDP to GTP. It remains bound to the aminoacyl-tRNA.EF-Tu.GTP complex up to the GTP hydrolysis stage on the ribosome. The protein is Elongation factor Ts of Phocaeicola vulgatus (strain ATCC 8482 / DSM 1447 / JCM 5826 / CCUG 4940 / NBRC 14291 / NCTC 11154) (Bacteroides vulgatus).